A 349-amino-acid chain; its full sequence is Anthranilate phosphoribosyltransferase (349 aa).

5-phospho-alpha-D-ribose 1-diphosphate contacts are provided by residues Gly82, 85-86 (GD), 92-95 (NVSS), 110-118 (KHGNRAVSG), and Ser122. Gly82 provides a ligand contact to anthranilate. Ser94 contacts Mg(2+). An anthranilate-binding site is contributed by Asn113. Arg168 serves as a coordination point for anthranilate. Mg(2+) is bound by residues Asp227 and Glu228.

Belongs to the anthranilate phosphoribosyltransferase family. As to quaternary structure, homodimer. Mg(2+) serves as cofactor.

The catalysed reaction is N-(5-phospho-beta-D-ribosyl)anthranilate + diphosphate = 5-phospho-alpha-D-ribose 1-diphosphate + anthranilate. Its pathway is amino-acid biosynthesis; L-tryptophan biosynthesis; L-tryptophan from chorismate: step 2/5. Catalyzes the transfer of the phosphoribosyl group of 5-phosphorylribose-1-pyrophosphate (PRPP) to anthranilate to yield N-(5'-phosphoribosyl)-anthranilate (PRA). This chain is Anthranilate phosphoribosyltransferase, found in Pseudomonas aeruginosa (strain LESB58).